We begin with the raw amino-acid sequence, 207 residues long: Guanylate kinase (207 aa).

One can recognise a Guanylate kinase-like domain in the interval 4–184; sequence GTLYIVSAPS…AQMDFRSIIR (181 aa). 11–18 lines the ATP pocket; it reads APSGAGKS.

The protein belongs to the guanylate kinase family.

Its subcellular location is the cytoplasm. The catalysed reaction is GMP + ATP = GDP + ADP. Functionally, essential for recycling GMP and indirectly, cGMP. This is Guanylate kinase from Aliivibrio fischeri (strain ATCC 700601 / ES114) (Vibrio fischeri).